A 643-amino-acid chain; its full sequence is Hypoxia up-regulated protein 1 (643 aa).

A signal peptide spans 1-22; that stretch reads MRPLVCVFTMFLLALLSSNTES. Residues 565–643 are disordered; that stretch reads LGNTISSLFG…EEEKSEPQEE (79 aa). Acidic residues predominate over residues 590 to 610; the sequence is VQEEDEVPTEPTKEEEQESAD. Basic and acidic residues-rich tracts occupy residues 611–621 and 630–643; these read AADKQKDKEKG and EGKKEEEKSEPQEE.

This sequence belongs to the heat shock protein 70 family.

Its subcellular location is the endoplasmic reticulum lumen. Its function is as follows. Has a pivotal role in cytoprotective cellular mechanisms triggered by oxygen deprivation. May play a role as a molecular chaperone and participate in protein folding. The sequence is that of Hypoxia up-regulated protein 1 (hyou1) from Xenopus tropicalis (Western clawed frog).